We begin with the raw amino-acid sequence, 310 residues long: Zinc finger protein 346 (310 aa).

Met1 carries the post-translational modification N-acetylmethionine. The segment covering 1–12 (MEYPAPAAVQAA) has biased composition (low complexity). Residues 1-33 (MEYPAPAAVQAADGGGAGPYNSSELLEGQEPDG) are disordered. Residues 70-104 (FTNTQCKVCCALLISESQKLAHYQSKKHANKVKRY) form a Matrin-type 1 zinc finger. Zn(2+)-binding residues include Cys75, Cys78, His91, and His97. Lys114 is covalently cross-linked (Glycyl lysine isopeptide (Lys-Gly) (interchain with G-Cter in SUMO2)). The segment at 131–165 (DKNQCCPICNMTFSSPVVAQSHYLGKTHAKNLKLK) adopts a Matrin-type 2 zinc-finger fold. Zn(2+)-binding residues include Cys136, Cys139, His152, and His158. Lys170 is covalently cross-linked (Glycyl lysine isopeptide (Lys-Gly) (interchain with G-Cter in SUMO2)). 2 Matrin-type zinc fingers span residues 198-232 (DPDK…ETKL) and 252-286 (GKGY…SPKT). The disordered stretch occupies residues 278 to 310 (KHKNQSPKTVASSLGQIPMQRQPIQKDSTTLED). Polar residues-rich tracts occupy residues 283-292 (SPKTVASSLG) and 299-310 (QPIQKDSTTLED).

As to quaternary structure, forms a heteromeric complex with XPO5 and ILF3. Found in a nuclear export complex with XPO5, RAN, ILF3, ZNF346 and double-stranded RNA. Interacts with XPO5. Interacts with ILF3 in an RNA-independent manner.

The protein localises to the nucleus. The protein resides in the nucleolus. It is found in the cytoplasm. Functionally, binds with low affinity to dsDNA and ssRNA, and with high affinity to dsRNA, with no detectable sequence specificity. The polypeptide is Zinc finger protein 346 (ZNF346) (Pongo abelii (Sumatran orangutan)).